A 59-amino-acid chain; its full sequence is UPF0434 protein Sputw3181_2540 (59 aa).

Belongs to the UPF0434 family.

The polypeptide is UPF0434 protein Sputw3181_2540 (Shewanella sp. (strain W3-18-1)).